A 443-amino-acid polypeptide reads, in one-letter code: Probable D-serine dehydratase (443 aa).

Lys118 bears the N6-(pyridoxal phosphate)lysine mark.

The protein belongs to the serine/threonine dehydratase family. DsdA subfamily. Requires pyridoxal 5'-phosphate as cofactor.

The catalysed reaction is D-serine = pyruvate + NH4(+). The polypeptide is Probable D-serine dehydratase (Vibrio campbellii (strain ATCC BAA-1116)).